Consider the following 322-residue polypeptide: N-acetyl-gamma-glutamyl-phosphate reductase (322 aa).

C132 is a catalytic residue.

It belongs to the NAGSA dehydrogenase family. Type 1 subfamily.

It is found in the cytoplasm. It catalyses the reaction N-acetyl-L-glutamate 5-semialdehyde + phosphate + NADP(+) = N-acetyl-L-glutamyl 5-phosphate + NADPH + H(+). Its pathway is amino-acid biosynthesis; L-arginine biosynthesis; N(2)-acetyl-L-ornithine from L-glutamate: step 3/4. Functionally, catalyzes the NADPH-dependent reduction of N-acetyl-5-glutamyl phosphate to yield N-acetyl-L-glutamate 5-semialdehyde. The chain is N-acetyl-gamma-glutamyl-phosphate reductase from Parabacteroides distasonis (strain ATCC 8503 / DSM 20701 / CIP 104284 / JCM 5825 / NCTC 11152).